The primary structure comprises 348 residues: GMP reductase (348 aa).

108-131 (ADFIKLRQILALSPSLKFICIDVA) contributes to the NADP(+) binding site. Residues Gly181 and Gly183 each contribute to the K(+) site. The Thioimidate intermediate role is filled by Cys186. 216–239 (IVSDGGCTMPGDVAKAFGGGADFV) provides a ligand contact to NADP(+).

This sequence belongs to the IMPDH/GMPR family. GuaC type 1 subfamily. As to quaternary structure, homotetramer.

The enzyme catalyses IMP + NH4(+) + NADP(+) = GMP + NADPH + 2 H(+). Functionally, catalyzes the irreversible NADPH-dependent deamination of GMP to IMP. It functions in the conversion of nucleobase, nucleoside and nucleotide derivatives of G to A nucleotides, and in maintaining the intracellular balance of A and G nucleotides. The chain is GMP reductase from Edwardsiella ictaluri (strain 93-146).